Reading from the N-terminus, the 130-residue chain is Small ribosomal subunit protein uS11 (130 aa).

Belongs to the universal ribosomal protein uS11 family. In terms of assembly, part of the 30S ribosomal subunit. Interacts with proteins S7 and S18. Binds to IF-3.

Its function is as follows. Located on the platform of the 30S subunit, it bridges several disparate RNA helices of the 16S rRNA. Forms part of the Shine-Dalgarno cleft in the 70S ribosome. This is Small ribosomal subunit protein uS11 from Caldicellulosiruptor bescii (strain ATCC BAA-1888 / DSM 6725 / KCTC 15123 / Z-1320) (Anaerocellum thermophilum).